A 43-amino-acid polypeptide reads, in one-letter code: Photosystem II reaction center protein Psb30 (43 aa).

A helical transmembrane segment spans residues 16-36 (IAQLTMLAMVLIAGPVVIVLL).

Belongs to the Psb30/Ycf12 family. PSII is composed of 1 copy each of membrane proteins PsbA, PsbB, PsbC, PsbD, PsbE, PsbF, PsbH, PsbI, PsbJ, PsbK, PsbL, PsbM, PsbT, PsbX, PsbY, PsbZ, Psb30/Ycf12, peripheral proteins PsbO, CyanoQ (PsbQ), PsbU, PsbV and a large number of cofactors. It forms dimeric complexes.

The protein resides in the cellular thylakoid membrane. Its function is as follows. A core subunit of photosystem II (PSII), probably helps stabilize the reaction center. The sequence is that of Photosystem II reaction center protein Psb30 from Trichodesmium erythraeum (strain IMS101).